Consider the following 296-residue polypeptide: NADH-cytochrome b5 reductase 2 (296 aa).

Residues 2-24 (LVALAAIGVTVLLFLIKALGSGA) form a helical membrane-spanning segment. One can recognise an FAD-binding FR-type domain in the interval 35-147 (NAKYPLPLIE…RGPNGLLVYK (113 aa)). Residues 127 to 142 (DSLK…GPNG) and 166 to 201 (VAKH…KCYL) each bind FAD.

This sequence belongs to the flavoprotein pyridine nucleotide cytochrome reductase family. The cofactor is FAD.

The protein localises to the membrane. The catalysed reaction is 2 Fe(III)-[cytochrome b5] + NADH = 2 Fe(II)-[cytochrome b5] + NAD(+) + H(+). In terms of biological role, NADH-cytochrome b5 reductases are involved in desaturation and elongation of fatty acids, cholesterol biosynthesis and drug metabolism. The protein is NADH-cytochrome b5 reductase 2 (cyb5r2) of Xenopus laevis (African clawed frog).